The sequence spans 213 residues: Motile sperm domain-containing protein 1 (213 aa).

The MSP domain occupies 16–143; sequence PVFVFPTELI…KEHLTESVFF (128 aa). The next 2 membrane-spanning stretches (helical) occupy residues 159–179 and 191–211; these read SLLT…PTLG and LSVN…MAIL. Residues 205–208 carry the Nuclear export signal motif; the sequence is LITM.

The protein localises to the endoplasmic reticulum membrane. Its subcellular location is the golgi apparatus membrane. In terms of biological role, plays a role in differentiation and/or proliferation of mesenchymal stem cells. Proposed to be involved in epithelial-to-mesenchymal transition (EMT). However, another study suggests that it is not required for EMT or stem cell self-renewal and acts during later stages of differentiation. This is Motile sperm domain-containing protein 1 (Mospd1) from Rattus norvegicus (Rat).